The following is a 661-amino-acid chain: UvrABC system protein B (661 aa).

The Helicase ATP-binding domain maps to 26–413 (KGINEGRKHQ…TPEMVEQIIR (388 aa)). 39–46 (GATGTGKT) lines the ATP pocket. The short motif at 92 to 115 (YYDYYQPEAYVPQTDTFIEKDASI) is the Beta-hairpin element. In terms of domain architecture, Helicase C-terminal spans 430-596 (QIDDLIGEIQ…TINKKIRDVI (167 aa)). In terms of domain architecture, UVR spans 625-660 (EKVIAQMESDMKEAAKALDFERAAELRDLLLELKSE).

Belongs to the UvrB family. Forms a heterotetramer with UvrA during the search for lesions. Interacts with UvrC in an incision complex.

Its subcellular location is the cytoplasm. Functionally, the UvrABC repair system catalyzes the recognition and processing of DNA lesions. A damage recognition complex composed of 2 UvrA and 2 UvrB subunits scans DNA for abnormalities. Upon binding of the UvrA(2)B(2) complex to a putative damaged site, the DNA wraps around one UvrB monomer. DNA wrap is dependent on ATP binding by UvrB and probably causes local melting of the DNA helix, facilitating insertion of UvrB beta-hairpin between the DNA strands. Then UvrB probes one DNA strand for the presence of a lesion. If a lesion is found the UvrA subunits dissociate and the UvrB-DNA preincision complex is formed. This complex is subsequently bound by UvrC and the second UvrB is released. If no lesion is found, the DNA wraps around the other UvrB subunit that will check the other stand for damage. The sequence is that of UvrABC system protein B from Bacillus licheniformis (strain ATCC 14580 / DSM 13 / JCM 2505 / CCUG 7422 / NBRC 12200 / NCIMB 9375 / NCTC 10341 / NRRL NRS-1264 / Gibson 46).